The chain runs to 126 residues: Fluoride-specific ion channel FluC (126 aa).

Helical transmembrane passes span P3–L23, Y36–F56, L68–A88, and W99–L119. The Na(+) site is built by G76 and T79.

This sequence belongs to the fluoride channel Fluc/FEX (TC 1.A.43) family.

It localises to the cell inner membrane. The enzyme catalyses fluoride(in) = fluoride(out). Na(+) is not transported, but it plays an essential structural role and its presence is essential for fluoride channel function. Fluoride-specific ion channel. Important for reducing fluoride concentration in the cell, thus reducing its toxicity. The chain is Fluoride-specific ion channel FluC from Cupriavidus pinatubonensis (strain JMP 134 / LMG 1197) (Cupriavidus necator (strain JMP 134)).